A 431-amino-acid polypeptide reads, in one-letter code: Gamma conglutin 1 (431 aa).

The signal sequence occupies residues 1–24; that stretch reads MASFLHNFLLFFCSLSLIILTSSA. The Peptidase A1 domain maps to 51–407; the sequence is HVVQIHKRTP…DLMNSRLGFS (357 aa). 5 disulfide bridges follow: Cys-79-Cys-168, Cys-93-Cys-106, Cys-98-Cys-123, Cys-109-Cys-118, and Cys-322-Cys-369.

It belongs to the peptidase A1 family. In terms of assembly, two-subunit monomeric unit made of alpha and beta subunits coupled by disulfide bonds (at pH 4.5 and under non-reducing conditions). Monomeric alpha and beta subunits in reducing conditions. Can also form oligomers including dimer, tetramer and cyclic hexamer (trimer of dimers) (at pH &gt; 5.5). Component of globulins complexes which accumulate in seeds. Interacts with flavonoids (e.g. apigenin glucosides) present in globulins complexes.

The protein resides in the secreted. Its subcellular location is the extracellular space. Its function is as follows. Sulfur-rich seed storage protein that remains undegraded at germination. The chain is Gamma conglutin 1 from Prunus dulcis (Almond).